Consider the following 297-residue polypeptide: Ribosome production factor 2 homolog (297 aa).

The Brix domain maps to 28 to 232; it reads KKALFCRGAK…VMRKKLADDA (205 aa).

It belongs to the RPF2 family.

It is found in the nucleus. The protein resides in the nucleolus. This is Ribosome production factor 2 homolog from Caenorhabditis elegans.